An 84-amino-acid chain; its full sequence is Small ribosomal subunit protein uS17 (84 aa).

Belongs to the universal ribosomal protein uS17 family. In terms of assembly, part of the 30S ribosomal subunit.

One of the primary rRNA binding proteins, it binds specifically to the 5'-end of 16S ribosomal RNA. This is Small ribosomal subunit protein uS17 from Yersinia enterocolitica serotype O:8 / biotype 1B (strain NCTC 13174 / 8081).